The following is a 128-amino-acid chain: Large ribosomal subunit protein bL17 (128 aa).

Belongs to the bacterial ribosomal protein bL17 family. In terms of assembly, part of the 50S ribosomal subunit. Contacts protein L32.

In Tolumonas auensis (strain DSM 9187 / NBRC 110442 / TA 4), this protein is Large ribosomal subunit protein bL17.